The chain runs to 436 residues: GTPase Der (436 aa).

EngA-type G domains are found at residues 4-167 (PTVA…PVEE) and 175-351 (IRFS…ESQN). Residues 10 to 17 (GRPNVGKS), 57 to 61 (DTGGI), 119 to 122 (NKVD), 181 to 188 (GRPNVGKS), 229 to 233 (DTAGM), and 294 to 297 (NKWD) each bind GTP. Positions 352–436 (KRIPSAVLND…PINLIARKRK (85 aa)) constitute a KH-like domain.

Belongs to the TRAFAC class TrmE-Era-EngA-EngB-Septin-like GTPase superfamily. EngA (Der) GTPase family. In terms of assembly, associates with the 50S ribosomal subunit.

In terms of biological role, GTPase that plays an essential role in the late steps of ribosome biogenesis. This is GTPase Der from Streptococcus agalactiae serotype III (strain NEM316).